Reading from the N-terminus, the 344-residue chain is Methionine import ATP-binding protein MetN (344 aa).

An ABC transporter domain is found at 2–241 (IEINQVNKVF…PKTELAHDFI (240 aa)). Residue 38-45 (GSSGAGKS) participates in ATP binding.

Belongs to the ABC transporter superfamily. Methionine importer (TC 3.A.1.24) family. In terms of assembly, the complex is composed of two ATP-binding proteins (MetN), two transmembrane proteins (MetI) and a solute-binding protein (MetQ).

It localises to the cell inner membrane. The catalysed reaction is L-methionine(out) + ATP + H2O = L-methionine(in) + ADP + phosphate + H(+). The enzyme catalyses D-methionine(out) + ATP + H2O = D-methionine(in) + ADP + phosphate + H(+). Its function is as follows. Part of the ABC transporter complex MetNIQ involved in methionine import. Responsible for energy coupling to the transport system. This Vibrio vulnificus (strain YJ016) protein is Methionine import ATP-binding protein MetN.